We begin with the raw amino-acid sequence, 490 residues long: Probable cytosol aminopeptidase (490 aa).

The Mn(2+) site is built by Lys260 and Asp265. Lys272 is a catalytic residue. Mn(2+) is bound by residues Asp284, Asp343, and Glu345. The active site involves Arg347.

Belongs to the peptidase M17 family. The cofactor is Mn(2+).

It localises to the cytoplasm. The catalysed reaction is Release of an N-terminal amino acid, Xaa-|-Yaa-, in which Xaa is preferably Leu, but may be other amino acids including Pro although not Arg or Lys, and Yaa may be Pro. Amino acid amides and methyl esters are also readily hydrolyzed, but rates on arylamides are exceedingly low.. The enzyme catalyses Release of an N-terminal amino acid, preferentially leucine, but not glutamic or aspartic acids.. Its function is as follows. Presumably involved in the processing and regular turnover of intracellular proteins. Catalyzes the removal of unsubstituted N-terminal amino acids from various peptides. In Gloeothece citriformis (strain PCC 7424) (Cyanothece sp. (strain PCC 7424)), this protein is Probable cytosol aminopeptidase.